Consider the following 64-residue polypeptide: Carnocyclin-A (64 aa).

A propeptide spanning residues 1-4 (MLYE) is cleaved from the precursor. A cross-link (cyclopeptide (Leu-Leu)) is located at residues 5–64 (LVAYGIAQGTAEKVVSLINAGLTVGSIISILGGVTVGLSGVFTAVKAAIAKQGIKKAIQL).

It localises to the secreted. Cyclopeptide antibiotic that inhibits the growth of Gram-positive bacteria, but has no effect on the growth of Gram-negative bacteria. The sequence is that of Carnocyclin-A from Carnobacterium maltaromaticum (Carnobacterium piscicola).